Consider the following 186-residue polypeptide: MAQSSSPISGVAERYAGSLFELALQANSVAKVESDLNSFEAMLAGSSDLTRLINSPVFSGEEQAKAIAAIADKAGITGLTGNFLRVVARNRRLFAVPGMIKAFRQIAAEHRGETAAEVTSAHELTAAQQTELKAALKSVAGKDVAISVTVDPSLLGGLVVKIGSRQIDTSLKTKLNSLKLALKEVG.

The protein belongs to the ATPase delta chain family. F-type ATPases have 2 components, F(1) - the catalytic core - and F(0) - the membrane proton channel. F(1) has five subunits: alpha(3), beta(3), gamma(1), delta(1), epsilon(1). F(0) has three main subunits: a(1), b(2) and c(10-14). The alpha and beta chains form an alternating ring which encloses part of the gamma chain. F(1) is attached to F(0) by a central stalk formed by the gamma and epsilon chains, while a peripheral stalk is formed by the delta and b chains.

The protein resides in the cell inner membrane. Its function is as follows. F(1)F(0) ATP synthase produces ATP from ADP in the presence of a proton or sodium gradient. F-type ATPases consist of two structural domains, F(1) containing the extramembraneous catalytic core and F(0) containing the membrane proton channel, linked together by a central stalk and a peripheral stalk. During catalysis, ATP synthesis in the catalytic domain of F(1) is coupled via a rotary mechanism of the central stalk subunits to proton translocation. In terms of biological role, this protein is part of the stalk that links CF(0) to CF(1). It either transmits conformational changes from CF(0) to CF(1) or is implicated in proton conduction. The polypeptide is ATP synthase subunit delta (Mesorhizobium japonicum (strain LMG 29417 / CECT 9101 / MAFF 303099) (Mesorhizobium loti (strain MAFF 303099))).